The sequence spans 489 residues: Probable serine protease EDA2 (489 aa).

Positions 1-25 (MSLEFGFILINIFTAIVSFSTLSHA) are cleaved as a signal peptide. Asn35, Asn51, and Asn162 each carry an N-linked (GlcNAc...) asparagine glycan. Ser178 functions as the Charge relay system in the catalytic mechanism. Asn253, Asn293, Asn365, and Asn406 each carry an N-linked (GlcNAc...) asparagine glycan. The active-site Charge relay system is Asp410. An N-linked (GlcNAc...) asparagine glycan is attached at Asn419. His436 functions as the Charge relay system in the catalytic mechanism. Asn456 carries an N-linked (GlcNAc...) asparagine glycan.

It belongs to the peptidase S28 family.

It is found in the secreted. May be involved in a proteolytic pathway controlling the nuclear division phase of megagametogenesis. The protein is Probable serine protease EDA2 (EDA2) of Arabidopsis thaliana (Mouse-ear cress).